Here is a 529-residue protein sequence, read N- to C-terminus: Bifunctional purine biosynthesis protein PurH (529 aa).

The 148-residue stretch at 1 to 148 (MQQRRPVRRA…KNHKDVAIVV (148 aa)) folds into the MGS-like domain.

This sequence belongs to the PurH family.

The enzyme catalyses (6R)-10-formyltetrahydrofolate + 5-amino-1-(5-phospho-beta-D-ribosyl)imidazole-4-carboxamide = 5-formamido-1-(5-phospho-D-ribosyl)imidazole-4-carboxamide + (6S)-5,6,7,8-tetrahydrofolate. The catalysed reaction is IMP + H2O = 5-formamido-1-(5-phospho-D-ribosyl)imidazole-4-carboxamide. The protein operates within purine metabolism; IMP biosynthesis via de novo pathway; 5-formamido-1-(5-phospho-D-ribosyl)imidazole-4-carboxamide from 5-amino-1-(5-phospho-D-ribosyl)imidazole-4-carboxamide (10-formyl THF route): step 1/1. It functions in the pathway purine metabolism; IMP biosynthesis via de novo pathway; IMP from 5-formamido-1-(5-phospho-D-ribosyl)imidazole-4-carboxamide: step 1/1. This chain is Bifunctional purine biosynthesis protein PurH, found in Salmonella dublin (strain CT_02021853).